We begin with the raw amino-acid sequence, 763 residues long: Actin filament-associated protein 1-like 1 (763 aa).

The segment at 83-137 is disordered; it reads LQDMPEDEAESCKAASPEPAKSPSLRHTADLPPPLPNRPPPEDYYEEALPLGPGK. Phosphoserine is present on residues serine 98, serine 104, and serine 153. Positions 169-210 are disordered; the sequence is TRMNGELKNSYNDSDAMSSSYESYDEEEEEGKGPQPTHQWPS. Residues 175–185 show a composition bias toward polar residues; the sequence is LKNSYNDSDAM. A PH 1 domain is found at 220 to 316; that stretch reads DCRICAFLLR…WLKVIREVSK (97 aa). Serine 329 and serine 343 each carry phosphoserine. The interval 343 to 380 is disordered; the sequence is SQEKQTSDSDSLGMGDSCSTLGREHGKGKKSSLSELKG. The PH 2 domain occupies 413 to 507; the sequence is EVPCCGYLNV…WLGLLLVEMG (95 aa). Tyrosine 552 is subject to Phosphotyrosine. Positions 561–604 are disordered; sequence QDEEPERPPGAQVKRHASTCSEKSHRVDPQVKVKRHASSAHQYK. A compositionally biased stretch (basic and acidic residues) spans 582-591; sequence EKSHRVDPQV. Residues 606–694 are a coiled coil; that stretch reads GKNRAEEDAR…LVTVKERLQQ (89 aa). Residues 712–724 show a composition bias toward polar residues; sequence SGETANKPQNNVP. The interval 712–763 is disordered; the sequence is SGETANKPQNNVPEQPLPVNCVSELRKRSPSIINSNQGRVLQKAKEWEMKKT. Position 742 is a phosphoserine (serine 742). Residues 754 to 763 show a composition bias toward basic and acidic residues; the sequence is KAKEWEMKKT.

In terms of assembly, interacts with CTTN.

It localises to the cytoplasm. The protein localises to the cell projection. Its subcellular location is the podosome. The protein resides in the invadopodium. It is found in the cytoskeleton. It localises to the stress fiber. May be involved in podosome and invadosome formation. The polypeptide is Actin filament-associated protein 1-like 1 (AFAP1L1) (Bos taurus (Bovine)).